The sequence spans 638 residues: Threonine--tRNA ligase (638 aa).

Residues 1 to 62 (MYQLTLPDKS…EKNSNIEVLT (62 aa)) enclose the TGS domain. Positions 246 to 537 (DHRKIGKEMD…LIEHYEGKFP (292 aa)) are catalytic. Residues Cys337, His388, and His514 each contribute to the Zn(2+) site.

The protein belongs to the class-II aminoacyl-tRNA synthetase family. As to quaternary structure, homodimer. It depends on Zn(2+) as a cofactor.

The protein localises to the cytoplasm. It catalyses the reaction tRNA(Thr) + L-threonine + ATP = L-threonyl-tRNA(Thr) + AMP + diphosphate + H(+). Its function is as follows. Catalyzes the attachment of threonine to tRNA(Thr) in a two-step reaction: L-threonine is first activated by ATP to form Thr-AMP and then transferred to the acceptor end of tRNA(Thr). Also edits incorrectly charged L-seryl-tRNA(Thr). This Leptospira interrogans serogroup Icterohaemorrhagiae serovar copenhageni (strain Fiocruz L1-130) protein is Threonine--tRNA ligase.